A 597-amino-acid chain; its full sequence is Elongation factor 4 (597 aa).

One can recognise a tr-type G domain in the interval 2–184; the sequence is QNIRNFSIIA…DIVKKIPAPE (183 aa). Residues 14-19 and 131-134 each bind GTP; these read DHGKST and NKID.

It belongs to the TRAFAC class translation factor GTPase superfamily. Classic translation factor GTPase family. LepA subfamily.

Its subcellular location is the cell inner membrane. The enzyme catalyses GTP + H2O = GDP + phosphate + H(+). Its function is as follows. Required for accurate and efficient protein synthesis under certain stress conditions. May act as a fidelity factor of the translation reaction, by catalyzing a one-codon backward translocation of tRNAs on improperly translocated ribosomes. Back-translocation proceeds from a post-translocation (POST) complex to a pre-translocation (PRE) complex, thus giving elongation factor G a second chance to translocate the tRNAs correctly. Binds to ribosomes in a GTP-dependent manner. The polypeptide is Elongation factor 4 (Haemophilus ducreyi (strain 35000HP / ATCC 700724)).